We begin with the raw amino-acid sequence, 392 residues long: MIEVQEFRAEVRQWLADNLVGDFAALKGLGGPGREHEAFEERRAWNQHLAAAGLTCLGWPVEHGGRGLSVAHRVAFYEEYARANAPDKVNHFGEELLGPTLIEYGTPEQQKRFLPKILDVTELWCQGYSEPNAGSDLANVSTTAELVGDAEASGATGNQYWVINGQKVWTSLAHWAQWCFVVARTEKGSKRHAGLSYLLVPLDQPGVEIRPINQLTGDSEFNEVFFDDARTEAGLVVGQPGDGWRVAMGTLTFERGVSTLGQQIRYAREHSNLVELAKRTGAADDPLIRERLVQSWTGLQAMRSYALATMDVEQPGQDNVSKLLWANWHRELGEIAMDVQGMAGLTLENGEFDEWQRLYLFSRADTIYGGSNEIQRNIIAERVLGLPREVKG.

FAD contacts are provided by residues 126-129 (QGYS) and S171. E254 serves as the catalytic Proton acceptor. FAD is bound at residue 371–373 (SNE).

It belongs to the acyl-CoA dehydrogenase family. In terms of assembly, heterotetramer composed of 2 IpdE1 subunits and 2 IpdE2 subunits. The cofactor is FAD.

The catalysed reaction is 3-[(3aS,4S,5R,7aS)-5-hydroxy-7a-methyl-1-oxo-octahydro-1H-inden-4-yl]propanoyl-CoA + A = (2E)-3-[(3aS,4S,5R,7aS)-5-hydroxy-7a-methyl-1-oxo-octahydro-1H-inden-4-yl]prop-2-enoyl-CoA + AH2. Its pathway is steroid metabolism; cholesterol degradation. Its function is as follows. Involved in cholesterol degradation. Catalyzes the dehydrogenation of 5OH-HIP-CoA to 5OH-HIPE-CoA. The protein is Acyl-CoA dehydrogenase IpdE1 of Mycolicibacterium smegmatis (strain ATCC 700084 / mc(2)155) (Mycobacterium smegmatis).